Consider the following 1293-residue polypeptide: Period circadian protein homolog 1 (1293 aa).

Residues 1–134 (MSGPLEGADG…SSEQSARART (134 aa)) are disordered. Residues 1–151 (MSGPLEGADG…LRELKLRLPP (151 aa)) are interaction with BTRC. Low complexity-rich tracts occupy residues 48–57 (NSNGSSGNES) and 64–115 (GASQ…ASSE). The segment covering 116–132 (QDNPSTSGCSSEQSARA) has biased composition (polar residues). Threonine 121 is modified (phosphothreonine; by CSNK1E). Serine 122 and serine 126 each carry phosphoserine; by CSNK1E. Positions 138–147 (LMTALRELKL) match the Nuclear export signal 1 motif. 2 consecutive PAS domains span residues 208–275 (ITSE…PSRL) and 348–414 (YEAP…KILQ). Positions 422–465 (HSPIRFCARNGEYVTMDTSWAGFVHPWSRKVAFVLGRHKVRTAP) constitute a PAC domain. A Nuclear export signal 2 motif is present at residues 489–498 (LSEQIHRLLL). 2 disordered regions span residues 509–544 (LCGV…PAPV) and 647–697 (TKRK…KEPV). Low complexity-rich tracts occupy residues 513–533 (GPLM…SNGG) and 652–661 (ASSSCTASSA). Residues 596–814 (ELEVAPAPDQ…GLDTSSVAPS (219 aa)) form a required for phosphorylation by CSNK1E region. Phosphoserine is present on residues serine 660, serine 662, and serine 703. 4 disordered regions span residues 748–771 (GLAP…APDA), 808–870 (TSSV…PPAT), 935–1094 (SQAP…SKYF), and 1204–1293 (SVQD…NGTS). A compositionally biased stretch (pro residues) spans 750-768 (APGPAPSPAPSPTVAPDPA). Serine 814 carries the phosphoserine modification. The Nuclear localization signal signature appears at 823-839 (IPSGRRHHCRSKAKRSR). The span at 826-843 (GRRHHCRSKAKRSRHHQT) shows a compositional bias: basic residues. Pro residues-rich tracts occupy residues 856–870 (SPVP…PPAT) and 952–962 (PSLPPPPPSPP). A compositionally biased stretch (polar residues) spans 969–982 (LFNSRCSSPLQLNL). A phosphoserine mark is found at serine 975 and serine 976. The Nuclear export signal 3 motif lies at 978–985 (LQLNLLQL). The segment covering 1032 to 1058 (LSGSSDLLELLLQEDSRSGTGSAASGS) has biased composition (low complexity). The LXXLL signature appears at 1039–1043 (LELLL). Positions 1059-1073 (LGSGLGSGSGSGSHE) are enriched in gly residues. Low complexity predominate over residues 1074 to 1091 (GGSTSASITRSSQSSHTS). Positions 1145-1293 (SRDAASVLKQ…ALPAEENGTS (149 aa)) are CRY binding domain. Over residues 1232-1250 (GEGGGVGGGGGGVGGGGGD) the composition is skewed to gly residues. The span at 1255 to 1269 (AQTQIGTKGSSSQDS) shows a compositional bias: polar residues.

Homodimer. Component of the circadian core oscillator, which includes the CRY proteins, CLOCK or NPAS2, BMAL1 or BMAL2, CSNK1D and/or CSNK1E, TIMELESS, and the PER proteins. Interacts directly with TIMELESS, PER2, PER3, CRY1 and CRY2. Interacts with BMAL1 and CLOCK. Interacts with GPRASP1. Interacts (phosphorylated) with BTRC and FBXW11; the interactions trigger proteasomal degradation. Interacts with NONO and WDR5. Interacts with SFPQ. Interacts with USP2. Interacts with HNF4A. Post-translationally, phosphorylated on serine residues by CSNK1D, CSNK1E and probably also by CSNK1G2. Phosphorylation by CSNK1D or CSNK1E promotes nuclear location of PER proteins as well as ubiquitination and subsequent degradation. May be dephosphorylated by PP1. In terms of processing, ubiquitinated; requires phosphorylation by CSNK1E and interaction with BTRC and FBXW11. Deubiquitinated by USP2. Expressed in pancreas. In the CNS, highly expressed in the SCN, internal granular layer of granular cells of the olfactory bulb, tuberculum olfactorium, piriform cortex, gyrus dentatus of the hippocampus, cerebellum, pars tuberalis/median eminence, and pituitary, and moderately in the tenia tecta, caudate putamen, accumbens nucleus, spinal cord, superior and inferior colliculus and pineal gland.

The protein localises to the nucleus. The protein resides in the cytoplasm. Its function is as follows. Transcriptional repressor which forms a core component of the circadian clock. The circadian clock, an internal time-keeping system, regulates various physiological processes through the generation of approximately 24 hour circadian rhythms in gene expression, which are translated into rhythms in metabolism and behavior. It is derived from the Latin roots 'circa' (about) and 'diem' (day) and acts as an important regulator of a wide array of physiological functions including metabolism, sleep, body temperature, blood pressure, endocrine, immune, cardiovascular, and renal function. Consists of two major components: the central clock, residing in the suprachiasmatic nucleus (SCN) of the brain, and the peripheral clocks that are present in nearly every tissue and organ system. Both the central and peripheral clocks can be reset by environmental cues, also known as Zeitgebers (German for 'timegivers'). The predominant Zeitgeber for the central clock is light, which is sensed by retina and signals directly to the SCN. The central clock entrains the peripheral clocks through neuronal and hormonal signals, body temperature and feeding-related cues, aligning all clocks with the external light/dark cycle. Circadian rhythms allow an organism to achieve temporal homeostasis with its environment at the molecular level by regulating gene expression to create a peak of protein expression once every 24 hours to control when a particular physiological process is most active with respect to the solar day. Transcription and translation of core clock components (CLOCK, NPAS2, BMAL1, BMAL2, PER1, PER2, PER3, CRY1 and CRY2) plays a critical role in rhythm generation, whereas delays imposed by post-translational modifications (PTMs) are important for determining the period (tau) of the rhythms (tau refers to the period of a rhythm and is the length, in time, of one complete cycle). A diurnal rhythm is synchronized with the day/night cycle, while the ultradian and infradian rhythms have a period shorter and longer than 24 hours, respectively. Disruptions in the circadian rhythms contribute to the pathology of cardiovascular diseases, cancer, metabolic syndromes and aging. A transcription/translation feedback loop (TTFL) forms the core of the molecular circadian clock mechanism. Transcription factors, CLOCK or NPAS2 and BMAL1 or BMAL2, form the positive limb of the feedback loop, act in the form of a heterodimer and activate the transcription of core clock genes and clock-controlled genes (involved in key metabolic processes), harboring E-box elements (5'-CACGTG-3') within their promoters. The core clock genes: PER1/2/3 and CRY1/2 which are transcriptional repressors form the negative limb of the feedback loop and interact with the CLOCK|NPAS2-BMAL1|BMAL2 heterodimer inhibiting its activity and thereby negatively regulating their own expression. This heterodimer also activates nuclear receptors NR1D1/2 and RORA/B/G, which form a second feedback loop and which activate and repress BMAL1 transcription, respectively. Regulates circadian target genes expression at post-transcriptional levels, but may not be required for the repression at transcriptional level. Controls PER2 protein decay. Represses CRY2 preventing its repression on CLOCK/BMAL1 target genes such as FXYD5 and SCNN1A in kidney and PPARA in liver. Besides its involvement in the maintenance of the circadian clock, has an important function in the regulation of several processes. Participates in the repression of glucocorticoid receptor NR3C1/GR-induced transcriptional activity by reducing the association of NR3C1/GR to glucocorticoid response elements (GREs) by BMAL1:CLOCK. Plays a role in the modulation of the neuroinflammatory state via the regulation of inflammatory mediators release, such as CCL2 and IL6. In spinal astrocytes, negatively regulates the MAPK14/p38 and MAPK8/JNK MAPK cascades as well as the subsequent activation of NFkappaB. Coordinately regulates the expression of multiple genes that are involved in the regulation of renal sodium reabsorption. Can act as gene expression activator in a gene and tissue specific manner, in kidney enhances WNK1 and SLC12A3 expression in collaboration with CLOCK. Modulates hair follicle cycling. Represses the CLOCK-BMAL1 induced transcription of BHLHE40/DEC1. The chain is Period circadian protein homolog 1 from Rattus norvegicus (Rat).